Reading from the N-terminus, the 342-residue chain is uncharacterized protein (342 aa).

Positions 1-18 are cleaved as a signal peptide; the sequence is MWKKLMLLLLMAIPLVSA.

This is an uncharacterized protein from Methanocaldococcus jannaschii (strain ATCC 43067 / DSM 2661 / JAL-1 / JCM 10045 / NBRC 100440) (Methanococcus jannaschii).